A 266-amino-acid chain; its full sequence is Glutamate racemase (266 aa).

Substrate is bound by residues 10 to 11 (DS) and 42 to 43 (YG). Cysteine 73 serves as the catalytic Proton donor/acceptor. 74–75 (NT) is a substrate binding site. Cysteine 183 (proton donor/acceptor) is an active-site residue. 184-185 (TH) is a substrate binding site.

It belongs to the aspartate/glutamate racemases family.

It carries out the reaction L-glutamate = D-glutamate. It participates in cell wall biogenesis; peptidoglycan biosynthesis. In terms of biological role, provides the (R)-glutamate required for cell wall biosynthesis. This chain is Glutamate racemase, found in Lactobacillus johnsonii (strain CNCM I-12250 / La1 / NCC 533).